The sequence spans 346 residues: Peripherin-2 (346 aa).

Residues methionine 1–asparagine 24 are Cytoplasmic-facing. The chain crosses the membrane as a helical span at residues tryptophan 25 to isoleucine 43. At glutamate 44–proline 61 the chain is on the lumenal side. The helical transmembrane segment at asparagine 62 to lysine 80 threads the bilayer. Topologically, residues isoleucine 81–lysine 99 are cytoplasmic. Residues leucine 100–arginine 123 traverse the membrane as a helical segment. Residues glycine 124–serine 264 lie on the Lumenal side of the membrane. An N-linked (GlcNAc...) asparagine glycan is attached at asparagine 229. The chain crosses the membrane as a helical span at residues methionine 265 to leucine 290. Over glutamate 291–glycine 346 the chain is Cytoplasmic. Residues glutamine 341–glycine 346 are interaction with MREG.

The protein belongs to the PRPH2/ROM1 family. As to quaternary structure, homodimer; disulfide-linked. Forms a homotetramer. Forms a heterotetramer with ROM1. Homotetramer and heterotetramer core complexes go on to form higher order complexes by formation of intermolecular disulfide bonds. Interacts with MREG. Interacts with STX3. Interacts with SNAP25. As to expression, retina (photoreceptor). In rim region of ROS (rod outer segment) disks.

It is found in the membrane. Its subcellular location is the cell projection. The protein resides in the cilium. The protein localises to the photoreceptor outer segment. It localises to the photoreceptor inner segment. In terms of biological role, essential for retina photoreceptor outer segment disk morphogenesis, may also play a role with ROM1 in the maintenance of outer segment disk structure. Required for the maintenance of retinal outer nuclear layer thickness. Required for the correct development and organization of the photoreceptor inner segment. The polypeptide is Peripherin-2 (Prph2) (Rattus norvegicus (Rat)).